Reading from the N-terminus, the 90-residue chain is Mu-theraphotoxin-Phlo1b (90 aa).

A signal peptide spans 1–22 (MKVSVLITLAVLGVMFVWTSAA). A propeptide spanning residues 23-50 (EQEDHGSDRRDSPALLKSLGRVFQSEER) is cleaved from the precursor. Disulfide bonds link Cys-52/Cys-66, Cys-59/Cys-71, and Cys-65/Cys-79. Phe-85 is modified (phenylalanine amide). Positions 86-90 (GNEKS) are excised as a propeptide.

This sequence belongs to the neurotoxin 10 (Hwtx-1) family. 39 (Jztx-34) subfamily. In terms of tissue distribution, expressed by the venom gland.

Its subcellular location is the secreted. In terms of biological role, gating-modifier toxin that inhibits voltage-gated sodium channel Nav by shifting the threshold for channel activation to more positive potentials. This toxin moderately inhibits human Nav1.7/SCN9A (IC(50)=360 nM) and weakly inhibits hNav1.2/SCN2A (37% inhibition at 1 uM peptide) and hNav1.5/SCN5A (&lt;20% inhibition at 1 uM peptide). Inhibition of Nav1.7 is voltage-dependent, with lower inhibition at more positive test pulses. In Phlogius sp. (Tarantula spider), this protein is Mu-theraphotoxin-Phlo1b.